The following is a 156-amino-acid chain: 2-C-methyl-D-erythritol 2,4-cyclodiphosphate synthase (156 aa).

Positions 8 and 10 each coordinate a divalent metal cation. 4-CDP-2-C-methyl-D-erythritol 2-phosphate-binding positions include aspartate 8 to histidine 10 and histidine 34 to serine 35. Histidine 42 lines the a divalent metal cation pocket. 4-CDP-2-C-methyl-D-erythritol 2-phosphate is bound by residues aspartate 56–glycine 58, phenylalanine 61–aspartate 65, alanine 100–alanine 106, threonine 132–glutamate 135, and phenylalanine 139.

This sequence belongs to the IspF family. Homotrimer. It depends on a divalent metal cation as a cofactor.

It catalyses the reaction 4-CDP-2-C-methyl-D-erythritol 2-phosphate = 2-C-methyl-D-erythritol 2,4-cyclic diphosphate + CMP. The protein operates within isoprenoid biosynthesis; isopentenyl diphosphate biosynthesis via DXP pathway; isopentenyl diphosphate from 1-deoxy-D-xylulose 5-phosphate: step 4/6. Functionally, involved in the biosynthesis of isopentenyl diphosphate (IPP) and dimethylallyl diphosphate (DMAPP), two major building blocks of isoprenoid compounds. Catalyzes the conversion of 4-diphosphocytidyl-2-C-methyl-D-erythritol 2-phosphate (CDP-ME2P) to 2-C-methyl-D-erythritol 2,4-cyclodiphosphate (ME-CPP) with a corresponding release of cytidine 5-monophosphate (CMP). The chain is 2-C-methyl-D-erythritol 2,4-cyclodiphosphate synthase from Clostridium perfringens (strain ATCC 13124 / DSM 756 / JCM 1290 / NCIMB 6125 / NCTC 8237 / Type A).